A 359-amino-acid polypeptide reads, in one-letter code: Thymidine kinase (359 aa).

17–24 serves as a coordination point for ATP; sequence GAHGLGKT. E45 serves as the catalytic Proton acceptor. Q99 contacts substrate. R187 contacts ATP. Position 193 (R193) interacts with substrate.

Belongs to the herpesviridae thymidine kinase family. In terms of assembly, homodimer.

It carries out the reaction thymidine + ATP = dTMP + ADP + H(+). Catalyzes the transfer of the gamma-phospho group of ATP to thymidine to generate dTMP in the salvage pathway of pyrimidine synthesis. The dTMP serves as a substrate for DNA polymerase during viral DNA replication. Allows the virus to be reactivated and to grow in non-proliferative cells lacking a high concentration of phosphorylated nucleic acid precursors. In Bos taurus (Bovine), this protein is Thymidine kinase.